We begin with the raw amino-acid sequence, 540 residues long: Cytokinin dehydrogenase 5 (540 aa).

The signal sequence occupies residues 1-22; the sequence is MNREMTSSFLLLTFAICKLIIA. The FAD-binding PCMH-type domain maps to 63 to 241; sequence SPEEPLAVLH…TRARISLEPA (179 aa). 3 residues coordinate FAD: Ala-97, Gly-99, and Gly-101. His-102 carries the post-translational modification Pros-8alpha-FAD histidine. Ser-103, Gln-107, Asp-165, Thr-170, Ser-176, Ile-180, and Ile-231 together coordinate FAD. 2 N-linked (GlcNAc...) asparagine glycosylation sites follow: Asn-310 and Asn-406. Residues Tyr-479 and Gln-517 each coordinate FAD.

This sequence belongs to the oxygen-dependent FAD-linked oxidoreductase family. Requires FAD as cofactor. Expressed in the developing leaf petioles and in the rib zone of the axillary shoot meristems. In roots, expressed in the vascular cylinder within the root apical meristem and only faintly detectable in the differentiated root.

It is found in the secreted. It localises to the extracellular space. It carries out the reaction N(6)-dimethylallyladenine + A + H2O = 3-methyl-2-butenal + adenine + AH2. In terms of biological role, catalyzes the oxidation of cytokinins, a family of N(6)-substituted adenine derivatives that are plant hormones, where the substituent is an isopentenyl group. In association with CKX3 regulates the activity of the reproductive meristems, flower organ size and ovule formation. In Arabidopsis thaliana (Mouse-ear cress), this protein is Cytokinin dehydrogenase 5 (CKX5).